The chain runs to 154 residues: 6,7-dimethyl-8-ribityllumazine synthase (154 aa).

Residues F23, 57–59, and 81–83 contribute to the 5-amino-6-(D-ribitylamino)uracil site; these read AFE and AVI. 86–87 lines the (2S)-2-hydroxy-3-oxobutyl phosphate pocket; it reads ST. H89 functions as the Proton donor in the catalytic mechanism. F114 lines the 5-amino-6-(D-ribitylamino)uracil pocket. R128 serves as a coordination point for (2S)-2-hydroxy-3-oxobutyl phosphate.

Belongs to the DMRL synthase family.

The catalysed reaction is (2S)-2-hydroxy-3-oxobutyl phosphate + 5-amino-6-(D-ribitylamino)uracil = 6,7-dimethyl-8-(1-D-ribityl)lumazine + phosphate + 2 H2O + H(+). Its pathway is cofactor biosynthesis; riboflavin biosynthesis; riboflavin from 2-hydroxy-3-oxobutyl phosphate and 5-amino-6-(D-ribitylamino)uracil: step 1/2. In terms of biological role, catalyzes the formation of 6,7-dimethyl-8-ribityllumazine by condensation of 5-amino-6-(D-ribitylamino)uracil with 3,4-dihydroxy-2-butanone 4-phosphate. This is the penultimate step in the biosynthesis of riboflavin. The sequence is that of 6,7-dimethyl-8-ribityllumazine synthase from Syntrophotalea carbinolica (strain DSM 2380 / NBRC 103641 / GraBd1) (Pelobacter carbinolicus).